Consider the following 545-residue polypeptide: CTP synthase (545 aa).

Residues 1-265 are amidoligase domain; that stretch reads MNGIKHIFIT…DKFVIKHLDL (265 aa). Residue serine 15 participates in CTP binding. Position 15 (serine 15) interacts with UTP. ATP is bound by residues 16-21 and aspartate 73; that span reads SIGKGL. Positions 73 and 141 each coordinate Mg(2+). CTP-binding positions include 148–150, 188–193, and lysine 224; these read DIE and KTKPTQ. Residues 188-193 and lysine 224 contribute to the UTP site; that span reads KTKPTQ. In terms of domain architecture, Glutamine amidotransferase type-1 spans 290 to 534; sequence EIAIIGKYTG…VAAALARKEI (245 aa). Residue glycine 349 participates in L-glutamine binding. Residue cysteine 376 is the Nucleophile; for glutamine hydrolysis of the active site. Residues 377-380, glutamate 400, and arginine 460 each bind L-glutamine; that span reads LGMQ. Residues histidine 507 and glutamate 509 contribute to the active site.

This sequence belongs to the CTP synthase family. In terms of assembly, homotetramer.

The catalysed reaction is UTP + L-glutamine + ATP + H2O = CTP + L-glutamate + ADP + phosphate + 2 H(+). It carries out the reaction L-glutamine + H2O = L-glutamate + NH4(+). The enzyme catalyses UTP + NH4(+) + ATP = CTP + ADP + phosphate + 2 H(+). It participates in pyrimidine metabolism; CTP biosynthesis via de novo pathway; CTP from UDP: step 2/2. Its activity is regulated as follows. Allosterically activated by GTP, when glutamine is the substrate; GTP has no effect on the reaction when ammonia is the substrate. The allosteric effector GTP functions by stabilizing the protein conformation that binds the tetrahedral intermediate(s) formed during glutamine hydrolysis. Inhibited by the product CTP, via allosteric rather than competitive inhibition. Catalyzes the ATP-dependent amination of UTP to CTP with either L-glutamine or ammonia as the source of nitrogen. Regulates intracellular CTP levels through interactions with the four ribonucleotide triphosphates. The protein is CTP synthase of Tropheryma whipplei (strain Twist) (Whipple's bacillus).